Consider the following 373-residue polypeptide: tRNA N6-adenosine threonylcarbamoyltransferase (373 aa).

3 residues coordinate a divalent metal cation: His128, His132, and Tyr149. Substrate contacts are provided by residues 149 to 153 (YVSGG), Asp181, Gly196, Glu200, and Asn302. Asp331 contributes to the a divalent metal cation binding site.

The protein belongs to the KAE1 / TsaD family. Component of the EKC/KEOPS complex composed of at least BUD32, CGI121, GON7, KAE1 and PCC1; the whole complex dimerizes. It depends on a divalent metal cation as a cofactor.

The protein resides in the cytoplasm. It localises to the nucleus. The catalysed reaction is L-threonylcarbamoyladenylate + adenosine(37) in tRNA = N(6)-L-threonylcarbamoyladenosine(37) in tRNA + AMP + H(+). Its function is as follows. Component of the EKC/KEOPS complex that is required for the formation of a threonylcarbamoyl group on adenosine at position 37 (t(6)A37) in tRNAs that read codons beginning with adenine. The complex is probably involved in the transfer of the threonylcarbamoyl moiety of threonylcarbamoyl-AMP (TC-AMP) to the N6 group of A37. KAE1 likely plays a direct catalytic role in this reaction, but requires other protein(s) of the complex to fulfill this activity. The EKC/KEOPS complex also promotes both telomere uncapping and telomere elongation. The complex is required for efficient recruitment of transcriptional coactivators. This chain is tRNA N6-adenosine threonylcarbamoyltransferase, found in Candida glabrata (strain ATCC 2001 / BCRC 20586 / JCM 3761 / NBRC 0622 / NRRL Y-65 / CBS 138) (Yeast).